Here is a 197-residue protein sequence, read N- to C-terminus: Imidazoleglycerol-phosphate dehydratase (197 aa).

Belongs to the imidazoleglycerol-phosphate dehydratase family.

Its subcellular location is the cytoplasm. The enzyme catalyses D-erythro-1-(imidazol-4-yl)glycerol 3-phosphate = 3-(imidazol-4-yl)-2-oxopropyl phosphate + H2O. It participates in amino-acid biosynthesis; L-histidine biosynthesis; L-histidine from 5-phospho-alpha-D-ribose 1-diphosphate: step 6/9. The sequence is that of Imidazoleglycerol-phosphate dehydratase from Chromobacterium violaceum (strain ATCC 12472 / DSM 30191 / JCM 1249 / CCUG 213 / NBRC 12614 / NCIMB 9131 / NCTC 9757 / MK).